Consider the following 148-residue polypeptide: uncharacterized protein (148 aa).

2 disordered regions span residues 1–86 (MCPP…VQSP) and 122–148 (RAHR…TSPC). The span at 38–57 (RPPKMQRRPRPPVAKRRRFP) shows a compositional bias: basic residues. The segment covering 134 to 148 (QSRQRPSPDSQTSPC) has biased composition (polar residues).

This sequence belongs to the Epstein-Barr virus BLLF2 family.

This is an uncharacterized protein from Homo sapiens (Human).